The primary structure comprises 366 residues: DNA integrity scanning protein DisA (366 aa).

The region spanning 21–159 (VHTLKGTLQR…EGKSHMLEQP (139 aa)) is the DAC domain. Residues Gly-88, Leu-106, and 119 to 123 (TRHRS) contribute to the ATP site.

It belongs to the DisA family. As to quaternary structure, homooctamer. Mg(2+) serves as cofactor.

The catalysed reaction is 2 ATP = 3',3'-c-di-AMP + 2 diphosphate. Its function is as follows. Participates in a DNA-damage check-point. DisA forms globular foci that rapidly scan along the chromosomes searching for lesions. In terms of biological role, also has diadenylate cyclase activity, catalyzing the condensation of 2 ATP molecules into cyclic di-AMP (c-di-AMP). c-di-AMP likely acts as a signaling molecule that may couple DNA integrity with a cellular process. In Corynebacterium glutamicum (strain ATCC 13032 / DSM 20300 / JCM 1318 / BCRC 11384 / CCUG 27702 / LMG 3730 / NBRC 12168 / NCIMB 10025 / NRRL B-2784 / 534), this protein is DNA integrity scanning protein DisA.